Here is a 341-residue protein sequence, read N- to C-terminus: S-adenosylmethionine:tRNA ribosyltransferase-isomerase (341 aa).

The protein belongs to the QueA family. In terms of assembly, monomer.

The protein localises to the cytoplasm. The enzyme catalyses 7-aminomethyl-7-carbaguanosine(34) in tRNA + S-adenosyl-L-methionine = epoxyqueuosine(34) in tRNA + adenine + L-methionine + 2 H(+). Its pathway is tRNA modification; tRNA-queuosine biosynthesis. Its function is as follows. Transfers and isomerizes the ribose moiety from AdoMet to the 7-aminomethyl group of 7-deazaguanine (preQ1-tRNA) to give epoxyqueuosine (oQ-tRNA). The polypeptide is S-adenosylmethionine:tRNA ribosyltransferase-isomerase (Clostridium botulinum (strain ATCC 19397 / Type A)).